We begin with the raw amino-acid sequence, 124 residues long: MKRIIKKDQSSVINYINDQKLLHLAIRAGYKNIVEYLLKKGANPNIQNNNGETTLHFAAMNGCVRTIECLIKSGAIIDSFDKFERTPLELAINSGNTDAVKLFLQYEATIGNTLNQYLNILVKN.

3 ANK repeats span residues 17-46 (NDQKLLHLAIRAGYKNIVEYLLKKGANPNI), 50-79 (NGETTLHFAAMNGCVRTIECLIKSGAIIDS), and 83-112 (FERTPLELAINSGNTDAVKLFLQYEATIGN).

This Rickettsia felis (strain ATCC VR-1525 / URRWXCal2) (Rickettsia azadi) protein is Putative ankyrin repeat protein RF_1087.